The sequence spans 274 residues: Large ribosomal subunit protein uL2 (274 aa).

Positions 223 to 258 (VAMNPVDHPHGGGEGRTSGGRHPVTPWGIPTKGYKT) are disordered.

It belongs to the universal ribosomal protein uL2 family. In terms of assembly, part of the 50S ribosomal subunit. Forms a bridge to the 30S subunit in the 70S ribosome.

One of the primary rRNA binding proteins. Required for association of the 30S and 50S subunits to form the 70S ribosome, for tRNA binding and peptide bond formation. It has been suggested to have peptidyltransferase activity; this is somewhat controversial. Makes several contacts with the 16S rRNA in the 70S ribosome. The chain is Large ribosomal subunit protein uL2 from Pelobacter propionicus (strain DSM 2379 / NBRC 103807 / OttBd1).